The primary structure comprises 306 residues: Glutaminase (306 aa).

Residues Ser-64, Asn-115, Glu-159, Asn-166, Tyr-190, Tyr-242, and Val-260 each contribute to the substrate site.

It belongs to the glutaminase family. As to quaternary structure, homotetramer.

It carries out the reaction L-glutamine + H2O = L-glutamate + NH4(+). This chain is Glutaminase, found in Vibrio vulnificus (strain YJ016).